Reading from the N-terminus, the 257-residue chain is MLSKRIIPCLDVKDGQVVKGVKFKGHEVVGDILTMAKAYSEAGADELVFYEISASVEKRLLDVNWVESIARHIDIPFCVAGGIKSVADAARVLERGADKISINSPAIARPELIKELHDEFGKQCVVVGIDSFYDEVTGEYLVYQLTGDPNASSRTRYKTQEWVKRVQDLGAGEIVLNCMNQDGVRNGYDIEQLSKIRELCNIPLIASGGAGSMQDFVDVFKQSEVDGALAASVFHKNVINIGELKQFLTNNQVAARL.

Residues Asp-11 and Asp-130 contribute to the active site.

This sequence belongs to the HisA/HisF family. Heterodimer of HisH and HisF.

The protein resides in the cytoplasm. It carries out the reaction 5-[(5-phospho-1-deoxy-D-ribulos-1-ylimino)methylamino]-1-(5-phospho-beta-D-ribosyl)imidazole-4-carboxamide + L-glutamine = D-erythro-1-(imidazol-4-yl)glycerol 3-phosphate + 5-amino-1-(5-phospho-beta-D-ribosyl)imidazole-4-carboxamide + L-glutamate + H(+). Its pathway is amino-acid biosynthesis; L-histidine biosynthesis; L-histidine from 5-phospho-alpha-D-ribose 1-diphosphate: step 5/9. Its function is as follows. IGPS catalyzes the conversion of PRFAR and glutamine to IGP, AICAR and glutamate. The HisF subunit catalyzes the cyclization activity that produces IGP and AICAR from PRFAR using the ammonia provided by the HisH subunit. The sequence is that of Imidazole glycerol phosphate synthase subunit HisF from Pseudoalteromonas translucida (strain TAC 125).